A 447-amino-acid chain; its full sequence is Histidine--tRNA ligase (447 aa).

It belongs to the class-II aminoacyl-tRNA synthetase family. In terms of assembly, homodimer.

It is found in the cytoplasm. The catalysed reaction is tRNA(His) + L-histidine + ATP = L-histidyl-tRNA(His) + AMP + diphosphate + H(+). This is Histidine--tRNA ligase (hisS) from Synechocystis sp. (strain ATCC 27184 / PCC 6803 / Kazusa).